Consider the following 218-residue polypeptide: Adenylate kinase (218 aa).

Position 10-15 (10-15 (GAGKGT)) interacts with ATP. Residues 30–59 (STGDMLRAAVKAGTPLGLEAKKVMDAGGLV) form an NMP region. AMP-binding positions include Thr31, Arg36, 57 to 59 (GLV), 85 to 88 (GFPR), and Gln92. An LID region spans residues 122–159 (GRRVHVASGRTYHVKFNPPKVAGKDDETGEDLIQRADD). ATP-binding positions include Arg123 and 132–133 (TY). Arg156 and Arg167 together coordinate AMP. Gly203 is a binding site for ATP.

It belongs to the adenylate kinase family. As to quaternary structure, monomer.

The protein resides in the cytoplasm. It catalyses the reaction AMP + ATP = 2 ADP. It functions in the pathway purine metabolism; AMP biosynthesis via salvage pathway; AMP from ADP: step 1/1. Its function is as follows. Catalyzes the reversible transfer of the terminal phosphate group between ATP and AMP. Plays an important role in cellular energy homeostasis and in adenine nucleotide metabolism. The protein is Adenylate kinase of Laribacter hongkongensis (strain HLHK9).